The primary structure comprises 58 residues: Small ribosomal subunit protein bS21 (58 aa).

Residues 27 to 58 (GTLQELRKREHYEKPSVKRKRKSEAARKRKKY) are disordered. The span at 31-42 (ELRKREHYEKPS) shows a compositional bias: basic and acidic residues. Residues 43-58 (VKRKRKSEAARKRKKY) are compositionally biased toward basic residues.

This sequence belongs to the bacterial ribosomal protein bS21 family.

The protein is Small ribosomal subunit protein bS21 (rpsU) of Lactococcus lactis subsp. lactis (strain IL1403) (Streptococcus lactis).